The sequence spans 335 residues: Phosphate acyltransferase (335 aa).

The protein belongs to the PlsX family. In terms of assembly, homodimer. Probably interacts with PlsY.

It is found in the cytoplasm. It carries out the reaction a fatty acyl-[ACP] + phosphate = an acyl phosphate + holo-[ACP]. Its pathway is lipid metabolism; phospholipid metabolism. In terms of biological role, catalyzes the reversible formation of acyl-phosphate (acyl-PO(4)) from acyl-[acyl-carrier-protein] (acyl-ACP). This enzyme utilizes acyl-ACP as fatty acyl donor, but not acyl-CoA. The sequence is that of Phosphate acyltransferase from Brevibacillus brevis (strain 47 / JCM 6285 / NBRC 100599).